A 485-amino-acid polypeptide reads, in one-letter code: 4-alpha-glucanotransferase (485 aa).

Belongs to the disproportionating enzyme family.

Its subcellular location is the cytoplasm. It carries out the reaction Transfers a segment of a (1-&gt;4)-alpha-D-glucan to a new position in an acceptor, which may be glucose or a (1-&gt;4)-alpha-D-glucan.. This chain is 4-alpha-glucanotransferase (malQ), found in Aquifex aeolicus (strain VF5).